Reading from the N-terminus, the 130-residue chain is Small ribosomal subunit protein uS9 (130 aa).

This sequence belongs to the universal ribosomal protein uS9 family. In terms of assembly, part of the 30S ribosomal subunit.

The sequence is that of Small ribosomal subunit protein uS9 (rpsI) from Bacillus subtilis (strain 168).